The chain runs to 538 residues: MARKGNPISVRLDLNRSSDPSRFSDYYYGKSLYQDVNLRSYFSSIRPPTILTFGFRLGRCIILHFPKRTFIHFFLPRRPLRLKRRDKSRPGKDKGRWWAFGKVGPIGCLHSSEGTEEERNEVRGRGAGKRVESIDREKQNEIRIWPKKMQRYGYHDRSPSRKKNFSKSLRVSGAFKHPKYAGVVNDIAFLIENDGPTSHLLKRTLPAVRPSLNYSVMQYFFNTKNKMHFDPVVVLNHFVAPGVAEPSTMGGAKGGSLDKRIRSRIAFFVESSTSEKKCLARAKKRLIHFIRQANDLRFAGTTKTTISLFPFFGATFFFPRDGVGVYNNPFFEYAREQLLGQLRIKCRNLMGKDKVMELIEKFIYLGRIGKLIKGIEMMIEIILRKRIIPYGYNSYLNEVQKMRSFLSNRTNTNTLIESVKIKSVYQSASLIAQDISFQLGNNPISFRSIFSQIVKDIPLIMPKGVEGIRICCSGRLGGAEIARTECGKYGKTSCNVFNQKIDYALAEVSTRNGISGVKVRISYSQNKKGRAISETYEI.

Residues 111-134 (SSEGTEEERNEVRGRGAGKRVESI) form a disordered region. The span at 120–134 (NEVRGRGAGKRVESI) shows a compositional bias: basic and acidic residues.

The protein belongs to the universal ribosomal protein uS3 family.

The protein resides in the mitochondrion. The sequence is that of Small ribosomal subunit protein uS3m (RPS3) from Oryza sativa subsp. japonica (Rice).